A 160-amino-acid chain; its full sequence is MSLATLDTTQHPNLPASSATLFSAKATKALSFEQIAQHIGRNEVATAAIFYGQAKASPEDIEKLSSLLDIDHETLKAQLSGFPDRGRSVEMPPKEPLIYRLYEIVQNYGYAYKAVLNEKFGDGIMSAISFSTKVEKETDEQGNNWAVITLRGKWLPFSRF.

Residues Arg100, Glu103, and Ser126 contribute to the active site.

The protein belongs to the cyanase family.

The catalysed reaction is cyanate + hydrogencarbonate + 3 H(+) = NH4(+) + 2 CO2. In terms of biological role, catalyzes the reaction of cyanate with bicarbonate to produce ammonia and carbon dioxide. This is Cyanate hydratase from Emericella nidulans (strain FGSC A4 / ATCC 38163 / CBS 112.46 / NRRL 194 / M139) (Aspergillus nidulans).